Reading from the N-terminus, the 859-residue chain is Protein EFR3 homolog (859 aa).

2 disordered regions span residues 638 to 657 (DDPLSSTAVNGTIPEGTPRT) and 697 to 724 (RDGNGDSWQREDGQNFDSTDGRESPDGY). Over residues 704 to 722 (WQREDGQNFDSTDGRESPD) the composition is skewed to basic and acidic residues.

It belongs to the EFR3 family.

This Caenorhabditis briggsae protein is Protein EFR3 homolog.